The sequence spans 260 residues: Hydroxyethylthiazole kinase 1 (260 aa).

Residue M39 coordinates substrate. Positions 115 and 160 each coordinate ATP. G187 is a binding site for substrate.

It belongs to the Thz kinase family. The cofactor is Mg(2+).

The enzyme catalyses 5-(2-hydroxyethyl)-4-methylthiazole + ATP = 4-methyl-5-(2-phosphooxyethyl)-thiazole + ADP + H(+). Its pathway is cofactor biosynthesis; thiamine diphosphate biosynthesis; 4-methyl-5-(2-phosphoethyl)-thiazole from 5-(2-hydroxyethyl)-4-methylthiazole: step 1/1. In terms of biological role, catalyzes the phosphorylation of the hydroxyl group of 4-methyl-5-beta-hydroxyethylthiazole (THZ). This chain is Hydroxyethylthiazole kinase 1, found in Streptococcus pneumoniae serotype 2 (strain D39 / NCTC 7466).